A 1149-amino-acid chain; its full sequence is ATP-dependent helicase/deoxyribonuclease subunit B (1149 aa).

Position 8 to 15 (8 to 15 (GRAGTGKT)) interacts with ATP. Positions 784, 1102, 1105, and 1111 each coordinate [4Fe-4S] cluster.

The protein belongs to the helicase family. AddB/RexB type 1 subfamily. Heterodimer of AddA and AddB. Mg(2+) serves as cofactor. Requires [4Fe-4S] cluster as cofactor.

The heterodimer acts as both an ATP-dependent DNA helicase and an ATP-dependent, dual-direction single-stranded exonuclease. Recognizes the chi site generating a DNA molecule suitable for the initiation of homologous recombination. The AddB subunit has 5' -&gt; 3' nuclease activity but not helicase activity. This Thermoanaerobacter pseudethanolicus (strain ATCC 33223 / 39E) (Clostridium thermohydrosulfuricum) protein is ATP-dependent helicase/deoxyribonuclease subunit B.